We begin with the raw amino-acid sequence, 156 residues long: Small ribosomal subunit protein uS7 (156 aa).

It belongs to the universal ribosomal protein uS7 family. In terms of assembly, part of the 30S ribosomal subunit. Contacts proteins S9 and S11.

Its function is as follows. One of the primary rRNA binding proteins, it binds directly to 16S rRNA where it nucleates assembly of the head domain of the 30S subunit. Is located at the subunit interface close to the decoding center, probably blocks exit of the E-site tRNA. The polypeptide is Small ribosomal subunit protein uS7 (Bacillus mycoides (strain KBAB4) (Bacillus weihenstephanensis)).